The chain runs to 607 residues: MASELIEQKLALLPSQPGSYQMKDKNGKIIYVGKAKNLKNRVRSYFKAEHTGKTAELVANIHDFEFIVTNSDKEAFLLENTLIKRYRPYFNIRLKFSGSYPYIEITNERDPRLILANTLKHDHGTYFGPYPNVYAASETLHFLEMTYPLRRCNGYQGRPCLYYSMGQCLGACWRTVPQEEYQKNIDAITRFLNGETGKAISDIKKKMKRASDSTEYELAADFRDRLKFIDQTVESQRVLQNDHTPRDLFNFYMDKGWMTIEIFFLRQGRLLRQQKETLALADSVKEELESYIQQFYSQKNAQKPKEVLVPKNVDTKLLAETLEIPVRTPVRGEKRDLLKLAAKNARITLEDKFRLMELNEEKTTGAMKEITDALKIPHGYRFEAFDHSNTQGSNYVSALVVFEDGLPNKNLYRRYKLRTPTGQDEAKATFEVITRRYTRLRDEGQMYPDLILMDGGEIQLHSAEAALRKLDIDIPVAAMVKNDKHQTADLLNSRGENLFLDPHSQGFYLLQRIQDEVHRFVITFHRQLRTKTNLSSRLDEIAGIGPKSRVKLMRRFGSLPKIADASIEDIEALGIGEKVATLVKVSVSAMVKSENKKIIAKRKFEKE.

In terms of domain architecture, GIY-YIG spans 15–92; the sequence is SQPGSYQMKD…IKRYRPYFNI (78 aa). Residues 197 to 232 enclose the UVR domain; that stretch reads GKAISDIKKKMKRASDSTEYELAADFRDRLKFIDQT.

The protein belongs to the UvrC family. In terms of assembly, interacts with UvrB in an incision complex.

It is found in the cytoplasm. In terms of biological role, the UvrABC repair system catalyzes the recognition and processing of DNA lesions. UvrC both incises the 5' and 3' sides of the lesion. The N-terminal half is responsible for the 3' incision and the C-terminal half is responsible for the 5' incision. This Oenococcus oeni (strain ATCC BAA-331 / PSU-1) protein is UvrABC system protein C.